Here is a 239-residue protein sequence, read N- to C-terminus: Derlin-2 (239 aa).

At 1-56 the chain is on the cytoplasmic side; that stretch reads MAYQSLRLEYLQIPPVSRAYTTACVLTTAAVQLELITPFQLYFNPELIFKHFQIWR. A helical membrane pass occupies residues 57–77; that stretch reads LITNFLFFGPVGFNFLFNMIF. The Lumenal segment spans residues 78-98; it reads LYRYCRMLEEGSFRGRTADFV. A helical transmembrane segment spans residues 99–119; sequence FMFLFGGFLMTLFGLFVSLVF. The Cytoplasmic segment spans residues 120–150; the sequence is LGQAFTIMLVYVWSRRNPYVRMNFFGLLNFQ. Residues 151-171 traverse the membrane as a helical segment; it reads APFLPWVLMGFSLLLGNSIIV. D172 is a topological domain (lumenal). A helical transmembrane segment spans residues 173–193; that stretch reads LLGIAVGHIYFFLEDVFPNQP. The Cytoplasmic segment spans residues 194 to 239; the sequence is GGIRILKTPSILKAIFDTPDEDPNYNPLPEERPGGFAWGEGQRLGG. Residues 215-239 are disordered; the sequence is DPNYNPLPEERPGGFAWGEGQRLGG. Residues 229-239 are compositionally biased toward gly residues; it reads FAWGEGQRLGG.

Belongs to the derlin family. In terms of assembly, forms homo- and heterooligomers with DERL3 and, to a lesser extent, with DERL1. Interacts with the SEL1L/SYVN1 and VCP/SELENOS protein complexes. Mediates association between VCP and EDEM1, as well as that between VCP and the misfolded glycoproteins. Interacts with OS9. Interacts with SELENOK and SELENOS. Interacts with the signal recognition particle/SRP and the SRP receptor; in the process of endoplasmic reticulum stress-induced pre-emptive quality control. Interacts with CCDC47.

The protein localises to the endoplasmic reticulum membrane. Functional component of endoplasmic reticulum-associated degradation (ERAD) for misfolded lumenal glycoproteins, but not that of misfolded nonglycoproteins. May act by forming a channel that allows the retrotranslocation of misfolded glycoproteins into the cytosol where they are ubiquitinated and degraded by the proteasome. May mediate the interaction between VCP and misfolded glycoproteins. May also be involved in endoplasmic reticulum stress-induced pre-emptive quality control, a mechanism that selectively attenuates the translocation of newly synthesized proteins into the endoplasmic reticulum and reroutes them to the cytosol for proteasomal degradation. The sequence is that of Derlin-2 from Pongo abelii (Sumatran orangutan).